The chain runs to 395 residues: Phosphoserine aminotransferase (395 aa).

Phosphothreonine is present on threonine 20. A pyridoxal 5'-phosphate-binding site is contributed by glycine 80–threonine 81. Serine 112 is subject to Phosphoserine. Pyridoxal 5'-phosphate contacts are provided by tryptophan 113, threonine 170, aspartate 194, and glutamine 217. Lysine 218 carries the N6-(pyridoxal phosphate)lysine modification. Asparagine 271–threonine 272 lines the pyridoxal 5'-phosphate pocket.

It belongs to the class-V pyridoxal-phosphate-dependent aminotransferase family. SerC subfamily. Homodimer. Pyridoxal 5'-phosphate is required as a cofactor.

The catalysed reaction is O-phospho-L-serine + 2-oxoglutarate = 3-phosphooxypyruvate + L-glutamate. It catalyses the reaction 4-(phosphooxy)-L-threonine + 2-oxoglutarate = (R)-3-hydroxy-2-oxo-4-phosphooxybutanoate + L-glutamate. It participates in amino-acid biosynthesis; L-serine biosynthesis; L-serine from 3-phospho-D-glycerate: step 2/3. Functionally, phosphoserine aminotransferase (PSAT) is a pyridoxal 5'-phosphate-dependent enzyme involved in the second step of the phosphorylated pathway of serine biosynthesis. Catalyzes the reversible conversion of 3-phosphohydroxypyruvate to phosphoserine and of 3-hydroxy-2-oxo-4-phosphonooxybutanoate to phosphohydroxythreonine. Plays an indirect role in purine biosynthesis. This is Phosphoserine aminotransferase from Saccharomyces cerevisiae (strain ATCC 204508 / S288c) (Baker's yeast).